The primary structure comprises 655 residues: Protein npp-24 (655 aa).

Residues 263–283 form a helical membrane-spanning segment; sequence ICSVFVLVSGGGVLSHLVVFP.

The protein resides in the membrane. This chain is Protein npp-24, found in Caenorhabditis elegans.